The primary structure comprises 465 residues: GTPase Der (465 aa).

EngA-type G domains lie at 3-166 (FLVA…LNEY) and 184-358 (IHFS…ACAN). GTP contacts are provided by residues 9–16 (GRANVGKS), 56–60 (DTGGI), 118–121 (NKVD), 190–197 (GRPNVGKS), 237–241 (DTAGV), and 302–305 (NKWD). One can recognise a KH-like domain in the interval 359–443 (KKITTADATR…PIVFEFKQSE (85 aa)). The interval 446-465 (FADRKNKRSKDEGSKSKKVK) is disordered.

It belongs to the TRAFAC class TrmE-Era-EngA-EngB-Septin-like GTPase superfamily. EngA (Der) GTPase family. As to quaternary structure, associates with the 50S ribosomal subunit.

Functionally, GTPase that plays an essential role in the late steps of ribosome biogenesis. The chain is GTPase Der from Francisella tularensis subsp. novicida (strain U112).